Consider the following 876-residue polypeptide: MAP7 domain-containing protein 3 (876 aa).

Met-1 is modified (N-acetylmethionine). Residues 65-144 adopt a coiled-coil conformation; that stretch reads NDIKQRLARE…DEAQKEKFTA (80 aa). 2 disordered regions span residues 72-137 and 170-246; these read ARER…KDEA and AMAN…KPRV. Over residues 171–183 the composition is skewed to polar residues; the sequence is MANSESKTANKRS. A Phosphoserine modification is found at Ser-185. Residues 191–211 show a composition bias toward polar residues; it reads QGTSALIRQMPLSSAGLQNSV. Residues 214–244 are compositionally biased toward basic and acidic residues; it reads RKTDKERSSSLNRRDSNLHSSTDKEQAERKP. A Phosphoserine modification is found at Ser-322. The tract at residues 407 to 475 is disordered; it reads EAAPEGSLEA…ARDAPKKSEM (69 aa). Positions 425-438 are enriched in basic and acidic residues; sequence APKESVKGSPKESM. 3 positions are modified to phosphoserine: Ser-441, Ser-457, and Ser-461. Residues 465–475 are compositionally biased toward basic and acidic residues; that stretch reads KARDAPKKSEM. Ser-490 bears the Phosphoserine mark. Disordered stretches follow at residues 509–533, 613–697, and 723–754; these read SPISTNRQIQKNCPPSPLPLISKQS, QREK…KKEH, and RKTDVNASKVTETSSHDIYEEAEADNEESDKD. Positions 510-521 are enriched in polar residues; sequence PISTNRQIQKNC. Ser-524 carries the post-translational modification Phosphoserine. Coiled-coil stretches lie at residues 558 to 640 and 689 to 724; these read VKKK…MAKE and EADKRKKEHERIMLQNLQERLERKKRIEEIMKRTRK. 2 stretches are compositionally biased toward basic and acidic residues: residues 613-639 and 680-697; these read QREKEEEERQREEMQQRVIKKSKDMAK and GDAKIKAQEEADKRKKEH. The segment covering 742 to 752 has biased composition (acidic residues); sequence EEAEADNEESD. 2 positions are modified to phosphoserine: Ser-770 and Ser-817. The tract at residues 802–876 is disordered; that stretch reads PKTYFNGDLK…LPKSSDTFRQ (75 aa). Polar residues predominate over residues 820–830; that stretch reads DTSIQEVVSRP. A compositionally biased stretch (basic residues) spans 831-842; that stretch reads SSKRMTSHTTKT. Ser-832 is subject to Phosphoserine. Over residues 848 to 860 the composition is skewed to polar residues; the sequence is TNTTSRSSAQTKS. Basic and acidic residues predominate over residues 861–876; it reads EGFHDILPKSSDTFRQ.

This sequence belongs to the MAP7 family. As to quaternary structure, interacts (via N-terminus coiled coil domains) with tubulin and microtubules.

The protein resides in the cytoplasm. Its subcellular location is the cytoskeleton. It is found in the spindle. Functionally, promotes the assembly and stability of microtubules. In Homo sapiens (Human), this protein is MAP7 domain-containing protein 3 (MAP7D3).